The following is a 904-amino-acid chain: Protein translocase subunit SecA (904 aa).

ATP is bound by residues Gln89, 107-111, and Asp496; that span reads GEGKT. The disordered stretch occupies residues 870 to 904; that stretch reads GGFQELSSGTPSPTVTVTTSSGGGTERKTSRRRKR. Positions 876-889 are enriched in low complexity; sequence SSGTPSPTVTVTTS.

This sequence belongs to the SecA family. Monomer and homodimer. Part of the essential Sec protein translocation apparatus which comprises SecA, SecYEG and auxiliary proteins SecDF. Other proteins may also be involved.

It is found in the cell inner membrane. The protein resides in the cytoplasm. The catalysed reaction is ATP + H2O + cellular proteinSide 1 = ADP + phosphate + cellular proteinSide 2.. Its function is as follows. Part of the Sec protein translocase complex. Interacts with the SecYEG preprotein conducting channel. Has a central role in coupling the hydrolysis of ATP to the transfer of proteins into and across the cell membrane, serving as an ATP-driven molecular motor driving the stepwise translocation of polypeptide chains across the membrane. The sequence is that of Protein translocase subunit SecA from Leptospira borgpetersenii serovar Hardjo-bovis (strain L550).